The sequence spans 102 residues: Small ribosomal subunit protein uS10 (102 aa).

Belongs to the universal ribosomal protein uS10 family. In terms of assembly, part of the 30S ribosomal subunit.

Functionally, involved in the binding of tRNA to the ribosomes. The chain is Small ribosomal subunit protein uS10 from Pelotomaculum thermopropionicum (strain DSM 13744 / JCM 10971 / SI).